A 273-amino-acid polypeptide reads, in one-letter code: 3-methyl-2-oxobutanoate hydroxymethyltransferase (273 aa).

Mg(2+)-binding residues include Asp-53 and Asp-92. 3-methyl-2-oxobutanoate-binding positions include 53–54, Asp-92, and Lys-122; that span reads DS. Residue Glu-124 participates in Mg(2+) binding. Residue Glu-191 is the Proton acceptor of the active site.

Belongs to the PanB family. As to quaternary structure, homodecamer; pentamer of dimers. Requires Mg(2+) as cofactor.

It is found in the cytoplasm. The enzyme catalyses 3-methyl-2-oxobutanoate + (6R)-5,10-methylene-5,6,7,8-tetrahydrofolate + H2O = 2-dehydropantoate + (6S)-5,6,7,8-tetrahydrofolate. It functions in the pathway cofactor biosynthesis; (R)-pantothenate biosynthesis; (R)-pantoate from 3-methyl-2-oxobutanoate: step 1/2. In terms of biological role, catalyzes the reversible reaction in which hydroxymethyl group from 5,10-methylenetetrahydrofolate is transferred onto alpha-ketoisovalerate to form ketopantoate. This Bacteroides thetaiotaomicron (strain ATCC 29148 / DSM 2079 / JCM 5827 / CCUG 10774 / NCTC 10582 / VPI-5482 / E50) protein is 3-methyl-2-oxobutanoate hydroxymethyltransferase.